A 314-amino-acid chain; its full sequence is Deoxymugineic acid synthase 1 (314 aa).

Asp-44 is an NADP(+) binding site. The active-site Proton donor is Tyr-49. His-112 contributes to the substrate binding site. Residues 158-159 (CN), Gln-180, 258-266 (FDEGRMKEN), and 273-281 (ELSEEERQR) contribute to the NADP(+) site.

The protein belongs to the aldo/keto reductase family.

It carries out the reaction 2'-deoxymugineate + NAD(+) = 3''-deamino-3''-oxonicotianamine + NADH + H(+). The catalysed reaction is 2'-deoxymugineate + NADP(+) = 3''-deamino-3''-oxonicotianamine + NADPH + H(+). It participates in siderophore biosynthesis. In terms of biological role, catalyzes the reduction of a 3''-keto intermediate during the biosynthesis of 2'-deoxymugineic acid (DMA) from L-Met. Involved in the formation of phytosiderophores (MAs) belonging to the mugineic acid family and required to acquire iron. The chain is Deoxymugineic acid synthase 1 from Zea mays (Maize).